Reading from the N-terminus, the 70-residue chain is DNA gyrase inhibitor YacG (70 aa).

Positions 1-15 (MPEDKKAAAKVEPLR) are enriched in basic and acidic residues. Positions 1-22 (MPEDKKAAAKVEPLRKTRPCPE) are disordered. Positions 20, 23, 35, and 39 each coordinate Zn(2+).

This sequence belongs to the DNA gyrase inhibitor YacG family. As to quaternary structure, interacts with GyrB. Zn(2+) is required as a cofactor.

Its function is as follows. Inhibits all the catalytic activities of DNA gyrase by preventing its interaction with DNA. Acts by binding directly to the C-terminal domain of GyrB, which probably disrupts DNA binding by the gyrase. This chain is DNA gyrase inhibitor YacG, found in Rhizobium johnstonii (strain DSM 114642 / LMG 32736 / 3841) (Rhizobium leguminosarum bv. viciae).